Consider the following 341-residue polypeptide: N-acetyl-gamma-glutamyl-phosphate reductase (341 aa).

C145 is an active-site residue.

It belongs to the NAGSA dehydrogenase family. Type 1 subfamily.

Its subcellular location is the cytoplasm. It catalyses the reaction N-acetyl-L-glutamate 5-semialdehyde + phosphate + NADP(+) = N-acetyl-L-glutamyl 5-phosphate + NADPH + H(+). Its pathway is amino-acid biosynthesis; L-arginine biosynthesis; N(2)-acetyl-L-ornithine from L-glutamate: step 3/4. Functionally, catalyzes the NADPH-dependent reduction of N-acetyl-5-glutamyl phosphate to yield N-acetyl-L-glutamate 5-semialdehyde. The protein is N-acetyl-gamma-glutamyl-phosphate reductase of Streptomyces clavuligerus.